Consider the following 377-residue polypeptide: Nuclear pore complex protein NUP54 (377 aa).

Residues 1 to 18 (MFGTPSSSPSFGTPSSTP) show a composition bias toward low complexity. The disordered stretch occupies residues 1 to 104 (MFGTPSSSPS…NTAQQQQQTP (104 aa)). 7 tandem repeats follow at residues 2 to 3 (FG), 11 to 12 (FG), 20 to 21 (FG), 27 to 28 (FG), 36 to 37 (FG), 49 to 50 (FG), and 87 to 88 (FG). Positions 2-88 (FGTPSSSPSF…FQQQPSSNFG (87 aa)) are 7 X 2 AA repeats of F-G. Positions 19–32 (AFGTSSPAFGTPSA) are enriched in polar residues. Low complexity predominate over residues 39–104 (PSNPSFSSGG…NTAQQQQQTP (66 aa)).

The protein belongs to the NUP54 family. In terms of assembly, part of the nuclear pore complex (NPC). The NPC has an eight-fold symmetrical structure comprising a central transport channel and two rings, the cytoplasmic and nuclear rings, to which eight filaments are attached. The cytoplasmic filaments have loose ends, while the nuclear filaments are joined in a distal ring, forming a nuclear basket. NPCs are highly dynamic in configuration and composition, and can be devided in 3 subcomplexes, the NUP62 subcomplex, the NUP107-160 subcomplex and the NUP93 subcomplex, containing approximately 30 different nucleoporin proteins.

The protein localises to the nucleus envelope. The protein resides in the nucleus. It is found in the nuclear pore complex. The chain is Nuclear pore complex protein NUP54 from Arabidopsis thaliana (Mouse-ear cress).